The following is a 357-amino-acid chain: Maleylacetate reductase 1 (357 aa).

The protein belongs to the iron-containing alcohol dehydrogenase family.

It catalyses the reaction 3-oxoadipate + NAD(+) = maleylacetate + NADH + H(+). The enzyme catalyses 3-oxoadipate + NADP(+) = maleylacetate + NADPH + H(+). It participates in aromatic compound metabolism; 3-chlorocatechol degradation. In terms of biological role, plays a major role in the degradation of chloroaromatic compounds by channeling maleylacetate and some of its substituted derivatives into the 3-oxoadipate pathway. This enzyme converts maleylacetate and 2-chloromaleylacetate with similar efficiencies. This Rhodococcus opacus (Nocardia opaca) protein is Maleylacetate reductase 1 (macA).